The following is a 178-amino-acid chain: NAD(P)H-quinone oxidoreductase subunit J (178 aa).

It belongs to the complex I 30 kDa subunit family. NDH-1 can be composed of about 15 different subunits; different subcomplexes with different compositions have been identified which probably have different functions.

The protein resides in the cellular thylakoid membrane. The enzyme catalyses a plastoquinone + NADH + (n+1) H(+)(in) = a plastoquinol + NAD(+) + n H(+)(out). It carries out the reaction a plastoquinone + NADPH + (n+1) H(+)(in) = a plastoquinol + NADP(+) + n H(+)(out). In terms of biological role, NDH-1 shuttles electrons from an unknown electron donor, via FMN and iron-sulfur (Fe-S) centers, to quinones in the respiratory and/or the photosynthetic chain. The immediate electron acceptor for the enzyme in this species is believed to be plastoquinone. Couples the redox reaction to proton translocation, and thus conserves the redox energy in a proton gradient. Cyanobacterial NDH-1 also plays a role in inorganic carbon-concentration. The sequence is that of NAD(P)H-quinone oxidoreductase subunit J from Crocosphaera subtropica (strain ATCC 51142 / BH68) (Cyanothece sp. (strain ATCC 51142)).